Consider the following 156-residue polypeptide: Aspartate carbamoyltransferase regulatory chain (156 aa).

Residues Cys110, Cys115, Cys140, and Cys143 each contribute to the Zn(2+) site.

Belongs to the PyrI family. As to quaternary structure, contains catalytic and regulatory chains. Zn(2+) serves as cofactor.

Its function is as follows. Involved in allosteric regulation of aspartate carbamoyltransferase. This Methanocella arvoryzae (strain DSM 22066 / NBRC 105507 / MRE50) protein is Aspartate carbamoyltransferase regulatory chain.